The sequence spans 44 residues: Protein PsbN (44 aa).

A helical transmembrane segment spans residues 6–26; the sequence is FFFTIFLWFFLLSITAYSIYV.

This sequence belongs to the PsbN family.

It localises to the plastid. The protein resides in the chloroplast thylakoid membrane. Its function is as follows. May play a role in photosystem I and II biogenesis. The protein is Protein PsbN of Stigeoclonium helveticum (Green alga).